The following is a 185-amino-acid chain: SESTSFSFTNFNPNQENLILQEDALVNSKGTLELTKNGKPVPESLGRNCTTLASFTTSFSFVMSAPNSLDVADGLAFFLAPPDTQPQKRGGFLGLFKDRKHDISYQSVAVEFDTYSNVWDPNTTHIGIDTNTIESKKITPFDMVYGEKILFASLVFPVSQDILPEYVRVGFSATTGLNEGVVETH.

A glycan (N-linked (GlcNAc...) asparagine) is linked at Asn-48. Mn(2+)-binding residues include Glu-111 and Asp-113. Residues Asp-113, Tyr-115, Asn-117, and Asp-120 each coordinate Ca(2+). A Mn(2+)-binding site is contributed by Asp-120. The N-linked (GlcNAc...) asparagine glycan is linked to Asn-122. Mn(2+) is bound at residue His-125.

This sequence belongs to the leguminous lectin family. As to quaternary structure, homo- or heterotetramer. V.villosa isolectins are composed of either two subunits a and two subunits B (A2B2), four subunits A (A4), or four subunits B (B4). The predominant form, isolectin B4, has no A1 erythrocyte agglutinating activity.

In terms of biological role, N-acetyl-D-galactosamine specific lectin. Binds the Tn determinant (GalNAc-alpha-O-Ser/Thr) of the tumor-associated glycopeptide. Could be required for agglutinating cells such as Tn-exposed erythrocytes. The chain is Lectin B4 from Vicia villosa (Hairy vetch).